We begin with the raw amino-acid sequence, 416 residues long: Cell division control protein 3 (416 aa).

The Septin-type G domain occupies 32-307; the sequence is RGFSLNIMAI…ENYRTEKLKR (276 aa). The tract at residues 42–49 is G1 motif; it reads GESGLGKA. GTP-binding positions include 42–49, Ser79, Gly105, 184–192, Gly240, and Arg256; these read GESGLGKA and KSDTLTDEE. A G3 motif region spans residues 102-105; that stretch reads TAPG. The interval 183 to 186 is G4 motif; it reads AKSD. Positions 323–399 form a coiled coil; it reads AAKQEEERAL…QLEKQKLLPQ (77 aa). The disordered stretch occupies residues 392 to 416; that stretch reads EKQKLLPQDPPAQPAPQKSRKGFLR.

This sequence belongs to the TRAFAC class TrmE-Era-EngA-EngB-Septin-like GTPase superfamily. Septin GTPase family.

It localises to the bud neck. In terms of biological role, plays a role in the cell cycle. Involved in the formation of the ring of filaments in the neck region at the mother-bud junction during mitosis. The sequence is that of Cell division control protein 3 (CDC3) from Candida albicans (Yeast).